The primary structure comprises 437 residues: Cytochrome b (437 aa).

The helical transmembrane segment at 45–65 (WIWGIVLAFTLVLQIVTGIVL) threads the bilayer. 2 residues coordinate heme b: histidine 97 and histidine 111. Transmembrane regions (helical) follow at residues 100 to 120 (GASLFFLAVYIHIFRGLYYGS), 129 to 149 (WIVGMVIYLLMMGTAFMGYVL), 156 to 176 (FWGATVITGLFGAIPGIGPSI), 194 to 214 (FFSLHYLLPFVIAALVAIHIW), 248 to 268 (FVIKDLFALALVLLGFFAVVA), 298 to 318 (FLPFYAILRAFAADVWVVILV), 330 to 350 (FFGVIAMFGAIAVMALAPWLD), 365 to 385 (MWFWFLVLDFVVLTWVGAMPT), and 391 to 411 (WISLIASTYWFAYFLVILPLL). Residues histidine 198 and histidine 212 each coordinate heme b.

The protein belongs to the cytochrome b family. The main subunits of complex b-c1 are: cytochrome b, cytochrome c1 and the Rieske protein. Heme b serves as cofactor.

The protein resides in the cell membrane. Its function is as follows. Component of the ubiquinol-cytochrome c reductase complex (complex III or cytochrome b-c1 complex), which is a respiratory chain that generates an electrochemical potential coupled to ATP synthesis. In Rhodobacter capsulatus (strain ATCC BAA-309 / NBRC 16581 / SB1003), this protein is Cytochrome b (petB).